A 56-amino-acid polypeptide reads, in one-letter code: uncharacterized protein (56 aa).

Residues 2-22 (ILYIIVAISILLNIILGIKVI) traverse the membrane as a helical segment.

Its subcellular location is the membrane. This is an uncharacterized protein from Methanocaldococcus jannaschii (strain ATCC 43067 / DSM 2661 / JAL-1 / JCM 10045 / NBRC 100440) (Methanococcus jannaschii).